Here is a 256-residue protein sequence, read N- to C-terminus: Hydroxyacylglutathione hydrolase (256 aa).

The Zn(2+) site is built by His55, His57, Asp59, His60, His113, Asp132, and His170.

It belongs to the metallo-beta-lactamase superfamily. Glyoxalase II family. In terms of assembly, monomer. Requires Zn(2+) as cofactor.

The enzyme catalyses an S-(2-hydroxyacyl)glutathione + H2O = a 2-hydroxy carboxylate + glutathione + H(+). The protein operates within secondary metabolite metabolism; methylglyoxal degradation; (R)-lactate from methylglyoxal: step 2/2. Its function is as follows. Thiolesterase that catalyzes the hydrolysis of S-D-lactoyl-glutathione to form glutathione and D-lactic acid. This Methylococcus capsulatus (strain ATCC 33009 / NCIMB 11132 / Bath) protein is Hydroxyacylglutathione hydrolase.